Reading from the N-terminus, the 555-residue chain is Formate--tetrahydrofolate ligase (555 aa).

Threonine 64–threonine 71 is a binding site for ATP.

Belongs to the formate--tetrahydrofolate ligase family.

The catalysed reaction is (6S)-5,6,7,8-tetrahydrofolate + formate + ATP = (6R)-10-formyltetrahydrofolate + ADP + phosphate. The protein operates within one-carbon metabolism; tetrahydrofolate interconversion. This chain is Formate--tetrahydrofolate ligase, found in Phocaeicola vulgatus (strain ATCC 8482 / DSM 1447 / JCM 5826 / CCUG 4940 / NBRC 14291 / NCTC 11154) (Bacteroides vulgatus).